A 156-amino-acid chain; its full sequence is tRNA (cytidine(34)-2'-O)-methyltransferase (156 aa).

Residues glycine 102, leucine 124, and serine 132 each coordinate S-adenosyl-L-methionine.

This sequence belongs to the class IV-like SAM-binding methyltransferase superfamily. RNA methyltransferase TrmH family. TrmL subfamily. Homodimer.

The protein localises to the cytoplasm. The catalysed reaction is cytidine(34) in tRNA + S-adenosyl-L-methionine = 2'-O-methylcytidine(34) in tRNA + S-adenosyl-L-homocysteine + H(+). It catalyses the reaction 5-carboxymethylaminomethyluridine(34) in tRNA(Leu) + S-adenosyl-L-methionine = 5-carboxymethylaminomethyl-2'-O-methyluridine(34) in tRNA(Leu) + S-adenosyl-L-homocysteine + H(+). Functionally, methylates the ribose at the nucleotide 34 wobble position in the two leucyl isoacceptors tRNA(Leu)(CmAA) and tRNA(Leu)(cmnm5UmAA). Catalyzes the methyl transfer from S-adenosyl-L-methionine to the 2'-OH of the wobble nucleotide. The chain is tRNA (cytidine(34)-2'-O)-methyltransferase from Burkholderia ambifaria (strain ATCC BAA-244 / DSM 16087 / CCUG 44356 / LMG 19182 / AMMD) (Burkholderia cepacia (strain AMMD)).